The primary structure comprises 64 residues: Probable spore germination protein GerPD (64 aa).

Functionally, required for the formation of functionally normal spores. Could be involved in the establishment of normal spore coat structure and/or permeability, which allows the access of germinants to their receptor. This chain is Probable spore germination protein GerPD (gerPD), found in Bacillus cereus.